The sequence spans 358 residues: Phenylalanine--tRNA ligase alpha subunit (358 aa).

A Mg(2+)-binding site is contributed by E258.

This sequence belongs to the class-II aminoacyl-tRNA synthetase family. Phe-tRNA synthetase alpha subunit type 1 subfamily. Tetramer of two alpha and two beta subunits. Mg(2+) is required as a cofactor.

Its subcellular location is the cytoplasm. It catalyses the reaction tRNA(Phe) + L-phenylalanine + ATP = L-phenylalanyl-tRNA(Phe) + AMP + diphosphate + H(+). This is Phenylalanine--tRNA ligase alpha subunit from Rhodospirillum rubrum (strain ATCC 11170 / ATH 1.1.1 / DSM 467 / LMG 4362 / NCIMB 8255 / S1).